Consider the following 402-residue polypeptide: 1-deoxy-D-xylulose 5-phosphate reductoisomerase (402 aa).

The NADPH site is built by threonine 21, glycine 22, serine 23, isoleucine 24, glycine 47, asparagine 50, and asparagine 127. Residue lysine 128 coordinates 1-deoxy-D-xylulose 5-phosphate. NADPH is bound at residue glutamate 129. Aspartate 151 is a binding site for Mn(2+). 4 residues coordinate 1-deoxy-D-xylulose 5-phosphate: serine 152, glutamate 153, serine 177, and histidine 200. Residue glutamate 153 coordinates Mn(2+). Glycine 206 contributes to the NADPH binding site. 4 residues coordinate 1-deoxy-D-xylulose 5-phosphate: serine 213, asparagine 218, lysine 219, and glutamate 222. Glutamate 222 provides a ligand contact to Mn(2+).

Belongs to the DXR family. It depends on Mg(2+) as a cofactor. Requires Mn(2+) as cofactor.

It catalyses the reaction 2-C-methyl-D-erythritol 4-phosphate + NADP(+) = 1-deoxy-D-xylulose 5-phosphate + NADPH + H(+). Its pathway is isoprenoid biosynthesis; isopentenyl diphosphate biosynthesis via DXP pathway; isopentenyl diphosphate from 1-deoxy-D-xylulose 5-phosphate: step 1/6. Catalyzes the NADPH-dependent rearrangement and reduction of 1-deoxy-D-xylulose-5-phosphate (DXP) to 2-C-methyl-D-erythritol 4-phosphate (MEP). This chain is 1-deoxy-D-xylulose 5-phosphate reductoisomerase, found in Mycobacterium marinum (strain ATCC BAA-535 / M).